The chain runs to 264 residues: Tryptophan synthase alpha chain (264 aa).

Active-site proton acceptor residues include glutamate 45 and aspartate 56.

The protein belongs to the TrpA family. Tetramer of two alpha and two beta chains.

The enzyme catalyses (1S,2R)-1-C-(indol-3-yl)glycerol 3-phosphate + L-serine = D-glyceraldehyde 3-phosphate + L-tryptophan + H2O. It participates in amino-acid biosynthesis; L-tryptophan biosynthesis; L-tryptophan from chorismate: step 5/5. Its function is as follows. The alpha subunit is responsible for the aldol cleavage of indoleglycerol phosphate to indole and glyceraldehyde 3-phosphate. This Leptospira borgpetersenii serovar Hardjo-bovis (strain JB197) protein is Tryptophan synthase alpha chain.